A 423-amino-acid polypeptide reads, in one-letter code: Glucose-1-phosphate adenylyltransferase (423 aa).

Alpha-D-glucose 1-phosphate is bound by residues Tyr107, Gly172, 187–188, and Ser205; that span reads EK.

This sequence belongs to the bacterial/plant glucose-1-phosphate adenylyltransferase family. As to quaternary structure, homotetramer.

It carries out the reaction alpha-D-glucose 1-phosphate + ATP + H(+) = ADP-alpha-D-glucose + diphosphate. It participates in glycan biosynthesis; glycogen biosynthesis. Its function is as follows. Involved in the biosynthesis of ADP-glucose, a building block required for the elongation reactions to produce glycogen. Catalyzes the reaction between ATP and alpha-D-glucose 1-phosphate (G1P) to produce pyrophosphate and ADP-Glc. The sequence is that of Glucose-1-phosphate adenylyltransferase from Albidiferax ferrireducens (strain ATCC BAA-621 / DSM 15236 / T118) (Rhodoferax ferrireducens).